We begin with the raw amino-acid sequence, 216 residues long: Redox-sensing transcriptional repressor Rex (216 aa).

Positions 17–56 (IYFRYLTFLHDAGTDRISSAELSDAIKFDAATIRRDFSYF) form a DNA-binding region, H-T-H motif. NAD(+) is bound at residue 91-96 (GAGNLG).

This sequence belongs to the transcriptional regulatory Rex family. Homodimer.

The protein localises to the cytoplasm. Functionally, modulates transcription in response to changes in cellular NADH/NAD(+) redox state. This is Redox-sensing transcriptional repressor Rex from Leuconostoc citreum (strain KM20).